Consider the following 1290-residue polypeptide: Sorbin and SH3 domain-containing protein 1 (1290 aa).

Disordered stretches follow at residues 1–211, 238–271, and 286–313; these read MSSE…LSDV, HKLNRDDDSDVHSPRYSFSDDTKSPLSVPRSKSE, and TLPLPARSSSLKSSPERNDWEPLDKKVD. Low complexity predominate over residues 45–61; the sequence is SSSYRGTPSSSPVSPQE. Thr-51 carries the phosphothreonine modification. Phosphoserine occurs at positions 55, 58, and 62. Positions 62 to 71 are enriched in basic and acidic residues; sequence SPKHESKSGL. 2 stretches are compositionally biased toward polar residues: residues 83–95 and 123–153; these read LSSSADTNGNAQP and EVSSSHIETDSQDFPPTSRPSSAYPSTTIVN. A compositionally biased stretch (basic and acidic residues) spans 161 to 173; that stretch reads HNRDPASERRAGE. 2 positions are modified to phosphoserine: Asp-164 and Asp-175. Thr-179 carries the post-translational modification Phosphothreonine. 8 positions are modified to phosphoserine: Ser-185, Ala-194, Ser-204, Ser-209, Ser-254, Ser-261, Ser-270, and Pro-288. A compositionally biased stretch (basic and acidic residues) spans 189-199; that stretch reads ASERRAKDASR. Residues 202–247 form the SoHo domain; that stretch reads VRSAQDLSDVSTDEVGIPLRNTERSKDWYKTMFKQIHKLNRDDDSD. Over residues 240 to 260 the composition is skewed to basic and acidic residues; the sequence is LNRDDDSDVHSPRYSFSDDTK. Basic and acidic residues predominate over residues 299–313; sequence SPERNDWEPLDKKVD. Tyr-325 carries the phosphotyrosine; by ABL1 modification. A phosphoserine mark is found at Ser-345, Pro-346, Tyr-357, Ser-376, and Ser-407. Residues 389–416 form a disordered region; it reads VETVNKSPSANSPQSSAVSPTPDITSEP. The span at 392–412 shows a compositional bias: polar residues; it reads VNKSPSANSPQSSAVSPTPDI. At Tyr-421 the chain carries Phosphotyrosine; by ABL1. Residues Ser-432 and Ser-470 each carry the phosphoserine modification. Disordered stretches follow at residues 463 to 482, 588 to 607, 697 to 739, 783 to 803, 822 to 841, and 862 to 972; these read LSGLKRPSSSASTKVDRKGG, YDSKSSSTMSLQEYGTSSRR, SLDF…EMDG, VSNDSREGSGGSVHGDFPKHR, RKHEQQSSRQSDWRSDSRGD, and PLQQ…SPRH. The residue at position 475 (Thr-475) is a Phosphothreonine. Polar residues-rich tracts occupy residues 595–606 and 704–722; these read TMSLQEYGTSSR and LSKSPTPVLSRSGLTSARS. At Ser-969 the chain carries Phosphoserine. 2 SH3 domains span residues 1049 to 1108 and 1123 to 1184; these read LEMR…LLPP and LEYG…VLKR. Position 1189 is a phosphothreonine (Thr-1189). Tyr-1193 and Tyr-1198 each carry phosphotyrosine. Residues 1198-1210 show a composition bias toward low complexity; sequence YSSSPSRSATVSP. A disordered region spans residues 1198–1227; it reads YSSSPSRSATVSPQQPQAQQRRVTPDRSQP. Phosphoserine is present on residues Ser-1201 and Ser-1209. Positions 1211–1227 are enriched in polar residues; it reads QQPQAQQRRVTPDRSQP. The SH3 3 domain occupies 1229–1290; it reads LDLCSYQALY…PGNYVKPLYL (62 aa). Phosphotyrosine; by ABL1 is present on Tyr-1238.

In terms of assembly, interacts (via SH3 domain 2) with PXN. Interacts with the long isoform of AFDN and with VCL. AFDN and VCL bind to SORBS1 in a competitive manner and do not form a ternary complex. Interacts with ABL1, CBL, CBLB and INPPL1/SHIP2 through the third SH3 domain. Interaction with ABL1 occurs only after insulin stimulation while this has no effect on the interaction with INPPL1. Interacts with the insulin receptor but dissociates from it following insulin stimulation. Also interacts with SCA7, PTK2/FAK1 and flotillin. Interacts (via third SH3 domain) with the Ten-1 ICD form of TENM1; the interaction induces the translocation of SORBS1 to the nucleus. Interacts with INSM1. In terms of processing, O-glycosylated. As to expression, expressed in all tissues tested: heart, brain, spleen, lung, liver, muscle, kidney and testis. Expressed in 3T3-L1 adipocytes but not in 3T3-L1 fibroblasts.

The protein localises to the cell junction. It is found in the adherens junction. It localises to the cell membrane. Its subcellular location is the cytoplasm. The protein resides in the cytoskeleton. The protein localises to the focal adhesion. It is found in the nucleus. It localises to the nucleus matrix. Plays a role in tyrosine phosphorylation of CBL by linking CBL to the insulin receptor. Required for insulin-stimulated glucose transport. Involved in formation of actin stress fibers and focal adhesions. The chain is Sorbin and SH3 domain-containing protein 1 from Mus musculus (Mouse).